The following is a 276-amino-acid chain: Large ribosomal subunit protein uL2 (276 aa).

Disordered stretches follow at residues 1–61 (MALK…HKQK) and 224–276 (AMNP…KKKN). Basic and acidic residues predominate over residues 15–31 (GRIDLRKDEITAQKPEK).

Belongs to the universal ribosomal protein uL2 family. Part of the 50S ribosomal subunit. Forms a bridge to the 30S subunit in the 70S ribosome.

Its function is as follows. One of the primary rRNA binding proteins. Required for association of the 30S and 50S subunits to form the 70S ribosome, for tRNA binding and peptide bond formation. It has been suggested to have peptidyltransferase activity; this is somewhat controversial. Makes several contacts with the 16S rRNA in the 70S ribosome. The polypeptide is Large ribosomal subunit protein uL2 (Treponema denticola (strain ATCC 35405 / DSM 14222 / CIP 103919 / JCM 8153 / KCTC 15104)).